The primary structure comprises 126 residues: Large ribosomal subunit protein bL12 (126 aa).

It belongs to the bacterial ribosomal protein bL12 family. As to quaternary structure, homodimer. Part of the ribosomal stalk of the 50S ribosomal subunit. Forms a multimeric L10(L12)X complex, where L10 forms an elongated spine to which 2 to 4 L12 dimers bind in a sequential fashion. Binds GTP-bound translation factors.

Functionally, forms part of the ribosomal stalk which helps the ribosome interact with GTP-bound translation factors. Is thus essential for accurate translation. This chain is Large ribosomal subunit protein bL12, found in Bifidobacterium longum subsp. infantis (strain ATCC 15697 / DSM 20088 / JCM 1222 / NCTC 11817 / S12).